The following is a 178-amino-acid chain: Large ribosomal subunit protein bL17 (178 aa).

A disordered region spans residues 150 to 178 (PADEPVVAEENAPQSAVKDAVDECEGKAD). Residues 168–178 (DAVDECEGKAD) are compositionally biased toward basic and acidic residues.

Belongs to the bacterial ribosomal protein bL17 family. In terms of assembly, part of the 50S ribosomal subunit. Contacts protein L32.

This chain is Large ribosomal subunit protein bL17, found in Geobacter metallireducens (strain ATCC 53774 / DSM 7210 / GS-15).